The primary structure comprises 425 residues: Probable mitochondrial import inner membrane translocase subunit tin-44 (425 aa).

Positions 38–149 form a coiled coil; it reads FLNNLIDNVR…EHVEKVAEKV (112 aa).

This sequence belongs to the Tim44 family. Probable component of the PAM complex at least composed of a mitochondrial HSP70 protein, GrpE, tin-44, tim-16 and tim-14/dnj-21. The complex interacts with the tim-23 component of the TIM23 complex.

It localises to the mitochondrion inner membrane. Essential component of the PAM complex, a complex required for the translocation of transit peptide-containing proteins from the inner membrane into the mitochondrial matrix in an ATP-dependent manner. Recruits mitochondrial HSP70 to drive protein translocation into the matrix using ATP as an energy source. The protein is Probable mitochondrial import inner membrane translocase subunit tin-44 of Caenorhabditis elegans.